The following is a 124-amino-acid chain: Small ribosomal subunit protein uS12 (124 aa).

Aspartate 89 is modified (3-methylthioaspartic acid). Positions 105–124 (QGVKNRKQARSRYGAKKEKS) are disordered. Residues 108-118 (KNRKQARSRYG) show a composition bias toward basic residues.

It belongs to the universal ribosomal protein uS12 family. Part of the 30S ribosomal subunit. Contacts proteins S8 and S17. May interact with IF1 in the 30S initiation complex.

Functionally, with S4 and S5 plays an important role in translational accuracy. Its function is as follows. Interacts with and stabilizes bases of the 16S rRNA that are involved in tRNA selection in the A site and with the mRNA backbone. Located at the interface of the 30S and 50S subunits, it traverses the body of the 30S subunit contacting proteins on the other side and probably holding the rRNA structure together. The combined cluster of proteins S8, S12 and S17 appears to hold together the shoulder and platform of the 30S subunit. The polypeptide is Small ribosomal subunit protein uS12 (rpsL) (Mycolicibacterium smegmatis (strain ATCC 700084 / mc(2)155) (Mycobacterium smegmatis)).